Reading from the N-terminus, the 143-residue chain is Large ribosomal subunit protein uL16 (143 aa).

It belongs to the universal ribosomal protein uL16 family. As to quaternary structure, part of the 50S ribosomal subunit.

Functionally, binds 23S rRNA and is also seen to make contacts with the A and possibly P site tRNAs. The protein is Large ribosomal subunit protein uL16 of Sphingopyxis alaskensis (strain DSM 13593 / LMG 18877 / RB2256) (Sphingomonas alaskensis).